The sequence spans 431 residues: Glutamate-1-semialdehyde 2,1-aminomutase (431 aa).

Lys-265 bears the N6-(pyridoxal phosphate)lysine mark.

It belongs to the class-III pyridoxal-phosphate-dependent aminotransferase family. HemL subfamily. Homodimer. It depends on pyridoxal 5'-phosphate as a cofactor.

It is found in the cytoplasm. It carries out the reaction (S)-4-amino-5-oxopentanoate = 5-aminolevulinate. Its pathway is porphyrin-containing compound metabolism; protoporphyrin-IX biosynthesis; 5-aminolevulinate from L-glutamyl-tRNA(Glu): step 2/2. This is Glutamate-1-semialdehyde 2,1-aminomutase from Aliivibrio fischeri (strain MJ11) (Vibrio fischeri).